The primary structure comprises 233 residues: Nickel import system ATP-binding protein NikE (233 aa).

Residues 2–228 (IELKHVTFGY…DRHPYTKELV (227 aa)) form the ABC transporter domain. 35–42 (GESGCGKS) serves as a coordination point for ATP.

It belongs to the ABC transporter superfamily. The complex is composed of two ATP-binding proteins (NikD and NikE), two transmembrane proteins (NikB and NikC) and a solute-binding protein (NikA).

It localises to the cell membrane. It catalyses the reaction Ni(2+)(out) + ATP + H2O = Ni(2+)(in) + ADP + phosphate + H(+). Functionally, part of the ABC transporter complex NikABCDE (Opp2) involved in nickel import. Probably responsible for energy coupling to the transport system. In Staphylococcus aureus (strain USA300), this protein is Nickel import system ATP-binding protein NikE.